Reading from the N-terminus, the 582-residue chain is ATP-dependent lipid A-core flippase (582 aa).

Transmembrane regions (helical) follow at residues Leu26–Leu46, Ile68–Leu88, Tyr140–Val160, Trp164–Val184, and Gly252–Pro272. The ABC transmembrane type-1 domain occupies Ile27–Arg310. Residues Ile342–Met578 enclose the ABC transporter domain. Residue Gly376–Ser383 coordinates ATP.

It belongs to the ABC transporter superfamily. Lipid exporter (TC 3.A.1.106) family. Homodimer.

It localises to the cell inner membrane. The catalysed reaction is ATP + H2O + lipid A-core oligosaccharideSide 1 = ADP + phosphate + lipid A-core oligosaccharideSide 2.. Functionally, involved in lipopolysaccharide (LPS) biosynthesis. Translocates lipid A-core from the inner to the outer leaflet of the inner membrane. Transmembrane domains (TMD) form a pore in the inner membrane and the ATP-binding domain (NBD) is responsible for energy generation. This chain is ATP-dependent lipid A-core flippase, found in Haemophilus ducreyi (strain 35000HP / ATCC 700724).